The chain runs to 510 residues: GTPase Der (510 aa).

EngA-type G domains are found at residues 3-167 (LKLA…GPEA) and 230-405 (IRLA…KDWT). GTP is bound by residues 9 to 16 (GRPNVGKS), 56 to 60 (DTAGF), 119 to 122 (NKAE), 236 to 243 (GRPNAGKS), 283 to 287 (DTAGL), and 348 to 351 (SKWD). In terms of domain architecture, KH-like spans 406-490 (ARAKTGDLNR…PIRLFVRQGK (85 aa)).

Belongs to the TRAFAC class TrmE-Era-EngA-EngB-Septin-like GTPase superfamily. EngA (Der) GTPase family. In terms of assembly, associates with the 50S ribosomal subunit.

GTPase that plays an essential role in the late steps of ribosome biogenesis. The sequence is that of GTPase Der from Hyphomonas neptunium (strain ATCC 15444).